The following is a 132-amino-acid chain: Small ribosomal subunit protein uS8 (132 aa).

It belongs to the universal ribosomal protein uS8 family. In terms of assembly, part of the 30S ribosomal subunit. Contacts proteins S5 and S12.

In terms of biological role, one of the primary rRNA binding proteins, it binds directly to 16S rRNA central domain where it helps coordinate assembly of the platform of the 30S subunit. The protein is Small ribosomal subunit protein uS8 of Psychrobacter arcticus (strain DSM 17307 / VKM B-2377 / 273-4).